The following is a 150-amino-acid chain: Large ribosomal subunit protein uL11 (150 aa).

Belongs to the universal ribosomal protein uL11 family. Part of the ribosomal stalk of the 50S ribosomal subunit. Interacts with L10 and the large rRNA to form the base of the stalk. L10 forms an elongated spine to which L12 dimers bind in a sequential fashion forming a multimeric L10(L12)X complex. Post-translationally, one or more lysine residues are methylated.

Forms part of the ribosomal stalk which helps the ribosome interact with GTP-bound translation factors. This chain is Large ribosomal subunit protein uL11, found in Jannaschia sp. (strain CCS1).